The chain runs to 411 residues: Lissencephaly-1 homolog (411 aa).

Residues 9 to 41 (QREELNQAIADYLGSNGYSSALEAFRKEADISG) form the LisH domain. Positions 56 to 83 (TSVIRLQKKVMELEAKLSEAEKEVIEGA) form a coiled coil. WD repeat units follow at residues 106–147 (GHRA…RSLK), 149–187 (HTSSVQDIAFDSQGKLLASCSADLSIKLWDFQQSYDCVK), 191–230 (GHDHNVSSVAFVPAGDYVLSASRDQTIKMWEVATGYCVKT), 233–272 (GHREWIRMVRVHMDGNIFASCSIDHSIRIWSINSRDCKAE), 275–334 (AHDH…CLFV), 337–376 (GHDNWVRELTFHPGGKYLVSASDDKTIRVWDLRNKRFMKT), and 379–411 (AHQHFCTSVDFHKKLPYVISGSVDNTVKVWECR).

It belongs to the WD repeat LIS1/nudF family.

It localises to the cytoplasm. The protein localises to the cytoskeleton. Its subcellular location is the microtubule organizing center. It is found in the centrosome. Positively regulates the activity of the minus-end directed microtubule motor protein dynein. May enhance dynein-mediated microtubule sliding by targeting dynein to the microtubule plus end. Required for several dynein- and microtubule-dependent processes. The chain is Lissencephaly-1 homolog from Glossina morsitans morsitans (Savannah tsetse fly).